The following is a 241-amino-acid chain: uncharacterized protein (241 aa).

Disordered stretches follow at residues 19–59 (ERDR…QQLG), 101–139 (VRRP…ASRS), and 152–182 (RGCR…KPCS). The segment covering 34–48 (ARGGRGLWTVGGGGS) has biased composition (gly residues). Positions 49-58 (PTETAESQQL) are enriched in polar residues. The span at 106–118 (PSVPSPLPKPPVP) shows a compositional bias: pro residues.

This is an uncharacterized protein from Homo sapiens (Human).